Reading from the N-terminus, the 147-residue chain is uncharacterized protein (147 aa).

This is an uncharacterized protein from Homo sapiens (Human).